A 514-amino-acid chain; its full sequence is Peptide chain release factor 3 (514 aa).

Residues 8 to 268 form the tr-type G domain; sequence KKRRTFAIIS…IFLKFAPEPH (261 aa). GTP-binding positions include 17–24, 85–89, and 139–142; these read SHPDAGKT, DTPGH, and NKLD.

It belongs to the TRAFAC class translation factor GTPase superfamily. Classic translation factor GTPase family. PrfC subfamily.

It is found in the cytoplasm. Increases the formation of ribosomal termination complexes and stimulates activities of RF-1 and RF-2. It binds guanine nucleotides and has strong preference for UGA stop codons. It may interact directly with the ribosome. The stimulation of RF-1 and RF-2 is significantly reduced by GTP and GDP, but not by GMP. This Streptococcus pneumoniae (strain P1031) protein is Peptide chain release factor 3.